Here is a 272-residue protein sequence, read N- to C-terminus: MKKIVESTTFPRTKQSITEDLKALGLKKGMTVLVHSSLSSIGWVNGGAVAVIQALIDVVTEEGTIVMPSQSVELSDPKEWGNPPVPEEWWDIIRESMPAYNSNYTPTTRGMGQIVELFRSYPEVKRSNHPNYSFVAWGKHKNKILNQHPLEFGLGEQSPLGKLYIRESYVLLLGADFDSSTCFHLAEYRIPYQKIINRGAPIIVEGKRVWKEYKELEFREELFQEVGQAFEAEHNMKVGKVGSANCRLFSLTEAVDFAEKWFINNDSKNIKK.

CoA contacts are provided by residues 38–44 (LSSIGWV) and Gln113.

This sequence belongs to the antibiotic N-acetyltransferase family. As to quaternary structure, homodimer.

Its function is as follows. May contribute to antibiotic resistance. This is SPbeta prophage-derived aminoglycoside N(3')-acetyltransferase-like protein YokD (yokD) from Bacillus subtilis (strain 168).